The primary structure comprises 208 residues: MSLVGGFPHHPVMHHDGYSFAAAAAASRCHEEPPYFHGWLISHPEMSPPDYTMAPSYSPEYSTGAPGLDHSHYGGVPGAGAVGMGPRTVKRRPTANRKERRRTQSINSAFAELRECIPNVPADTKLSKIKTLRLATSYIAYLMDILDKDEQNGETEAFKAEFKKTDAKEERRKKEMNDVLKSSGSSNDKKTKGRTGWPQHVWALELKQ.

Disordered stretches follow at residues 79-106 and 161-197; these read AGAV…TQSI and EFKK…RTGW. Basic residues predominate over residues 88–103; that stretch reads TVKRRPTANRKERRRT. Residues 90-142 form the bHLH domain; it reads KRRPTANRKERRRTQSINSAFAELRECIPNVPADTKLSKIKTLRLATSYIAYL. The span at 161 to 178 shows a compositional bias: basic and acidic residues; it reads EFKKTDAKEERRKKEMND.

Efficient DNA binding requires dimerization with another bHLH protein.

The protein localises to the nucleus. Its function is as follows. Essential for myocardial and pectoral fin differentiation, patterning and morphogenesis. This Danio rerio (Zebrafish) protein is Heart- and neural crest derivatives-expressed protein 2 (hand2).